The sequence spans 167 residues: Urease accessory protein UreE (167 aa).

It belongs to the UreE family.

The protein localises to the cytoplasm. Functionally, involved in urease metallocenter assembly. Binds nickel. Probably functions as a nickel donor during metallocenter assembly. This is Urease accessory protein UreE from Pseudomonas aeruginosa (strain LESB58).